A 443-amino-acid chain; its full sequence is Proline--tRNA ligase (443 aa).

Belongs to the class-II aminoacyl-tRNA synthetase family. ProS type 2 subfamily. Homodimer.

The protein localises to the cytoplasm. It catalyses the reaction tRNA(Pro) + L-proline + ATP = L-prolyl-tRNA(Pro) + AMP + diphosphate. In terms of biological role, catalyzes the attachment of proline to tRNA(Pro) in a two-step reaction: proline is first activated by ATP to form Pro-AMP and then transferred to the acceptor end of tRNA(Pro). This is Proline--tRNA ligase from Zymomonas mobilis subsp. mobilis (strain ATCC 10988 / DSM 424 / LMG 404 / NCIMB 8938 / NRRL B-806 / ZM1).